The following is a 161-amino-acid chain: Transcriptional regulator MraZ (161 aa).

2 SpoVT-AbrB domains span residues 7–69 and 98–141; these read KELH…EPDV and LDVV…EPER.

The protein belongs to the MraZ family. Forms oligomers.

The protein localises to the cytoplasm. It localises to the nucleoid. This Chlorobium limicola (strain DSM 245 / NBRC 103803 / 6330) protein is Transcriptional regulator MraZ.